A 435-amino-acid polypeptide reads, in one-letter code: DEAD-box ATP-dependent RNA helicase CshB (435 aa).

The Q motif signature appears at 5-33 (SRFDQFGFQPFIGLAIDKLGFYEPTEVQQ). In terms of domain architecture, Helicase ATP-binding spans 36-208 (IPGILKGESI…SKYMENPRYE (173 aa)). ATP is bound at residue 49–56 (SQTGTGKT). A DEAD box motif is present at residues 156 to 159 (DEAD). The Helicase C-terminal domain maps to 235–378 (LLKNVLVGSQ…HVDWKNKEFV (144 aa)). The segment at 383–435 (RNRRAKREAKRETADPREIGMRKKAKQKGKPNYKKKINYKMNEIKRRERRKKR) is disordered. A compositionally biased stretch (basic and acidic residues) spans 391–403 (AKRETADPREIGM). The segment covering 404–420 (RKKAKQKGKPNYKKKIN) has biased composition (basic residues).

Belongs to the DEAD box helicase family. CshB subfamily.

The protein localises to the cytoplasm. The enzyme catalyses ATP + H2O = ADP + phosphate + H(+). In terms of biological role, DEAD-box RNA helicase involved in cold tolerance, motility, and tolerance to heat, alkali and oxidative stress. This chain is DEAD-box ATP-dependent RNA helicase CshB, found in Listeria monocytogenes serovar 1/2a (strain ATCC BAA-679 / EGD-e).